We begin with the raw amino-acid sequence, 217 residues long: Thiamine-phosphate synthase (217 aa).

4-amino-2-methyl-5-(diphosphooxymethyl)pyrimidine-binding positions include 42-46 (QYRDK) and Asp77. Mg(2+)-binding residues include Asp78 and Asp97. Ser116 lines the 4-amino-2-methyl-5-(diphosphooxymethyl)pyrimidine pocket. Position 143–145 (143–145 (TTS)) interacts with 2-[(2R,5Z)-2-carboxy-4-methylthiazol-5(2H)-ylidene]ethyl phosphate. Lys146 is a binding site for 4-amino-2-methyl-5-(diphosphooxymethyl)pyrimidine. 2-[(2R,5Z)-2-carboxy-4-methylthiazol-5(2H)-ylidene]ethyl phosphate contacts are provided by residues Gly174 and 194 to 195 (IS).

This sequence belongs to the thiamine-phosphate synthase family. It depends on Mg(2+) as a cofactor.

The enzyme catalyses 2-[(2R,5Z)-2-carboxy-4-methylthiazol-5(2H)-ylidene]ethyl phosphate + 4-amino-2-methyl-5-(diphosphooxymethyl)pyrimidine + 2 H(+) = thiamine phosphate + CO2 + diphosphate. The catalysed reaction is 2-(2-carboxy-4-methylthiazol-5-yl)ethyl phosphate + 4-amino-2-methyl-5-(diphosphooxymethyl)pyrimidine + 2 H(+) = thiamine phosphate + CO2 + diphosphate. It catalyses the reaction 4-methyl-5-(2-phosphooxyethyl)-thiazole + 4-amino-2-methyl-5-(diphosphooxymethyl)pyrimidine + H(+) = thiamine phosphate + diphosphate. Its pathway is cofactor biosynthesis; thiamine diphosphate biosynthesis; thiamine phosphate from 4-amino-2-methyl-5-diphosphomethylpyrimidine and 4-methyl-5-(2-phosphoethyl)-thiazole: step 1/1. Condenses 4-methyl-5-(beta-hydroxyethyl)thiazole monophosphate (THZ-P) and 2-methyl-4-amino-5-hydroxymethyl pyrimidine pyrophosphate (HMP-PP) to form thiamine monophosphate (TMP). In Lactiplantibacillus plantarum (strain ATCC BAA-793 / NCIMB 8826 / WCFS1) (Lactobacillus plantarum), this protein is Thiamine-phosphate synthase.